The sequence spans 192 residues: Ribosome maturation factor RimM (192 aa).

The region spanning 115-189 (EGEYYLSDLI…RIEITPPKGL (75 aa)) is the PRC barrel domain.

This sequence belongs to the RimM family. As to quaternary structure, binds ribosomal protein uS19.

Its subcellular location is the cytoplasm. An accessory protein needed during the final step in the assembly of 30S ribosomal subunit, possibly for assembly of the head region. Essential for efficient processing of 16S rRNA. May be needed both before and after RbfA during the maturation of 16S rRNA. It has affinity for free ribosomal 30S subunits but not for 70S ribosomes. This Acaryochloris marina (strain MBIC 11017) protein is Ribosome maturation factor RimM.